Here is a 112-residue protein sequence, read N- to C-terminus: Nitrogen regulatory protein GlnK2 (112 aa).

ADP contacts are provided by residues Thr29, 37–39, Val64, and 87–90; these read GVQ and GDGK. Residues Thr29, 37-39, Val64, and 87-90 each bind ATP; these read GVQ and GDGK.

It belongs to the P(II) protein family. In terms of assembly, homotrimer. Interacts and forms a complex with Amt2.

Its subcellular location is the cytoplasm. In terms of biological role, involved in the regulation of nitrogen metabolism. Regulates the activity of its targets by protein-protein interaction in response to the nitrogen status of the cell. Regulates the activity of the ammonia channel Amt2 via direct interaction. This is Nitrogen regulatory protein GlnK2 from Methanocaldococcus jannaschii (strain ATCC 43067 / DSM 2661 / JAL-1 / JCM 10045 / NBRC 100440) (Methanococcus jannaschii).